A 436-amino-acid polypeptide reads, in one-letter code: GTPase Der (436 aa).

EngA-type G domains lie at 4–167 (PTIA…PNEE) and 175–351 (IKFS…QSQN). GTP-binding positions include 10-17 (GRPNVGKS), 57-61 (DTGGI), 119-122 (NKVD), 181-188 (GRPNVGKS), 229-233 (DTAGM), and 294-297 (NKWD). The KH-like domain occupies 352 to 436 (TRIPSAVLND…PIHLIARKRK (85 aa)).

This sequence belongs to the TRAFAC class TrmE-Era-EngA-EngB-Septin-like GTPase superfamily. EngA (Der) GTPase family. In terms of assembly, associates with the 50S ribosomal subunit.

Functionally, GTPase that plays an essential role in the late steps of ribosome biogenesis. The sequence is that of GTPase Der from Streptococcus sanguinis (strain SK36).